The primary structure comprises 204 residues: Gellan lyase (204 aa).

As to quaternary structure, multimer.

The protein localises to the secreted. It catalyses the reaction Eliminative cleavage of beta-D-glucopyranosyl-(1-&gt;4)-beta-D-glucopyranosyluronate bonds of gellan backbone releasing tetrasaccharides containing a 4-deoxy-4,5-unsaturated D-glucopyranosyluronic acid at the non-reducing end. The tetrasaccharide produced from deacetylated gellan is beta-D-4-deoxy-Delta(4)-GlcAp-(1-&gt;4)-beta-D-Glcp-(1-&gt;4)-alpha-L-Rhap-(1-&gt;3)-beta-D-Glcp.. Activity is stimulated by zinc, potassium, lithium, cobalt, sodium, calcium, iron, manganase, magnesium and mercury ions at a concentration of 1 mM, but inhibited by copper ions at a concentration of 1 mM. Activity is inhibited by potassium, sodium and magnesium ions at a concentration of 1 M. Activity is inhibited by urea, EDTA, dithiothreitol, p-CMB, PSF, natrium lauryl sulfate and N-bromosuccinimide. In terms of biological role, cleaves the glycosidic bonds of gellan backbone and releases tetrasaccharide units of glucuronyl-glucosyl-rhamnosyl-glucose with unsaturated glucuronic acid at the non-reducing terminal. The enzyme is highly specific to the heteropolysaccharide gellan. This is Gellan lyase from Geobacillus stearothermophilus (Bacillus stearothermophilus).